Reading from the N-terminus, the 238-residue chain is Purine nucleoside phosphorylase DeoD-type (238 aa).

A purine D-ribonucleoside is bound at residue His-4. Phosphate-binding positions include Gly-20, Arg-24, Arg-43, and 87–90 (RVGS). Residues 179 to 181 (EME) and 203 to 204 (SD) contribute to the a purine D-ribonucleoside site. The Proton donor role is filled by Asp-204.

It belongs to the PNP/UDP phosphorylase family. As to quaternary structure, homohexamer; trimer of homodimers.

The catalysed reaction is a purine D-ribonucleoside + phosphate = a purine nucleobase + alpha-D-ribose 1-phosphate. It catalyses the reaction a purine 2'-deoxy-D-ribonucleoside + phosphate = a purine nucleobase + 2-deoxy-alpha-D-ribose 1-phosphate. In terms of biological role, catalyzes the reversible phosphorolytic breakdown of the N-glycosidic bond in the beta-(deoxy)ribonucleoside molecules, with the formation of the corresponding free purine bases and pentose-1-phosphate. The protein is Purine nucleoside phosphorylase DeoD-type of Haemophilus influenzae (strain PittEE).